The primary structure comprises 357 residues: Holliday junction branch migration complex subunit RuvB (357 aa).

Residues 4-195 are large ATPase domain (RuvB-L); the sequence is TDKLAAKAVS…FGIVARLEFY (192 aa). ATP contacts are provided by residues Leu34, Arg35, Gly76, Lys79, Thr80, Thr81, 142-144, Arg185, Tyr195, and Arg232; that span reads EDY. Thr80 contributes to the Mg(2+) binding site. Residues 196–266 form a small ATPAse domain (RuvB-S) region; sequence TPTELARIVT…VADAALAMLD (71 aa). The head domain (RuvB-H) stretch occupies residues 269–357; that stretch reads AVGFDLMDRK…PARDLWDNNA (89 aa). The DNA site is built by Arg305, Arg324, and Arg329.

It belongs to the RuvB family. In terms of assembly, homohexamer. Forms an RuvA(8)-RuvB(12)-Holliday junction (HJ) complex. HJ DNA is sandwiched between 2 RuvA tetramers; dsDNA enters through RuvA and exits via RuvB. An RuvB hexamer assembles on each DNA strand where it exits the tetramer. Each RuvB hexamer is contacted by two RuvA subunits (via domain III) on 2 adjacent RuvB subunits; this complex drives branch migration. In the full resolvosome a probable DNA-RuvA(4)-RuvB(12)-RuvC(2) complex forms which resolves the HJ.

It is found in the cytoplasm. The enzyme catalyses ATP + H2O = ADP + phosphate + H(+). The RuvA-RuvB-RuvC complex processes Holliday junction (HJ) DNA during genetic recombination and DNA repair, while the RuvA-RuvB complex plays an important role in the rescue of blocked DNA replication forks via replication fork reversal (RFR). RuvA specifically binds to HJ cruciform DNA, conferring on it an open structure. The RuvB hexamer acts as an ATP-dependent pump, pulling dsDNA into and through the RuvAB complex. RuvB forms 2 homohexamers on either side of HJ DNA bound by 1 or 2 RuvA tetramers; 4 subunits per hexamer contact DNA at a time. Coordinated motions by a converter formed by DNA-disengaged RuvB subunits stimulates ATP hydrolysis and nucleotide exchange. Immobilization of the converter enables RuvB to convert the ATP-contained energy into a lever motion, pulling 2 nucleotides of DNA out of the RuvA tetramer per ATP hydrolyzed, thus driving DNA branch migration. The RuvB motors rotate together with the DNA substrate, which together with the progressing nucleotide cycle form the mechanistic basis for DNA recombination by continuous HJ branch migration. Branch migration allows RuvC to scan DNA until it finds its consensus sequence, where it cleaves and resolves cruciform DNA. The chain is Holliday junction branch migration complex subunit RuvB from Ralstonia nicotianae (strain ATCC BAA-1114 / GMI1000) (Ralstonia solanacearum).